A 249-amino-acid chain; its full sequence is Proteasome subunit alpha 2 (249 aa).

The residue at position 1 (methionine 1) is an N-acetylmethionine.

The protein belongs to the peptidase T1A family. The 20S proteasome core is composed of 14 alpha and 14 beta subunits that assemble into four stacked heptameric rings, resulting in a barrel-shaped structure. The two inner rings, each composed of seven catalytic beta subunits, are sandwiched by two outer rings, each composed of seven alpha subunits. H.volcanii produces at least 2 types of 20S proteasomes: an alpha1-beta proteasome and a proteasome containing all three subunits (alpha1, alpha2, and beta) that appears to be asymmetrical with homo-oligomeric alpha1 and alpha2 rings positioned on separate ends. The catalytic chamber with the active sites is on the inside of the barrel. Has probably a gated structure, the ends of the cylinder being occluded by the N-termini of the alpha-subunits. Is likely capped at one or both ends by the proteasome regulatory ATPase, PAN.

It localises to the cytoplasm. With respect to regulation, the formation of the proteasomal ATPase PAN-20S proteasome complex, via the docking of the C-termini of PAN into the intersubunit pockets in the alpha-rings, triggers opening of the gate for substrate entry. Interconversion between the open-gate and close-gate conformations leads to a dynamic regulation of the 20S proteasome proteolysis activity. Its function is as follows. Component of the proteasome core, a large protease complex with broad specificity involved in protein degradation. The H.volcanii alpha1-beta-alpha2 proteasome is able to cleave oligopeptides after Tyr and thus displays chymotrypsin-like activity. The protein is Proteasome subunit alpha 2 of Haloferax volcanii (strain ATCC 29605 / DSM 3757 / JCM 8879 / NBRC 14742 / NCIMB 2012 / VKM B-1768 / DS2) (Halobacterium volcanii).